Here is a 741-residue protein sequence, read N- to C-terminus: Transketolase-1, chloroplastic (741 aa).

The transit peptide at 1-66 directs the protein to the chloroplast; it reads MASTSSLALS…NRSLRPLVRA (66 aa). The interval 22–51 is disordered; sequence GSDQRGSLPAFSGLKSTGSRASASSRRRIA. A67 carries the N-acetylalanine modification. H103 serves as a coordination point for substrate. Residues H143 and 192 to 194 each bind thiamine diphosphate; that span reads GPL. D233 contacts Mg(2+). Residues G234 and N263 each coordinate thiamine diphosphate. Mg(2+)-binding residues include N263 and I265. Residue H340 coordinates substrate. Position 340 (H340) interacts with thiamine diphosphate. S428 is subject to Phosphoserine. 2 residues coordinate substrate: R434 and S461. Residues E488 and F515 each coordinate thiamine diphosphate. E488 serves as the catalytic Proton donor. Substrate-binding residues include H539, D547, and R598.

The protein belongs to the transketolase family. In terms of assembly, homodimer. Mg(2+) is required as a cofactor. It depends on Ca(2+) as a cofactor. Requires Mn(2+) as cofactor. Co(2+) serves as cofactor. The cofactor is thiamine diphosphate.

The protein localises to the plastid. Its subcellular location is the chloroplast stroma. It catalyses the reaction D-sedoheptulose 7-phosphate + D-glyceraldehyde 3-phosphate = aldehydo-D-ribose 5-phosphate + D-xylulose 5-phosphate. It functions in the pathway carbohydrate biosynthesis; Calvin cycle. Catalyzes the reversible transfer of a two-carbon ketol group from fructose-6-phosphate or sedoheptulose-7-phosphate to glyceraldehyde-3-phosphate to yield xylulose-5-phosphate and erythrose-4-phosphate or ribose-5-phosphate, respectively. Could act as a stress sensor involved in adaptation process. This Arabidopsis thaliana (Mouse-ear cress) protein is Transketolase-1, chloroplastic (TKL-1).